A 414-amino-acid chain; its full sequence is Zinc metalloproteinase nas-26 (414 aa).

The signal sequence occupies residues 1–20 (MTSSLVLILAPLALVAIGEA). Residues 21–61 (AFGNSSKIFEIPGLEVMASDKYPHFTTIETVSRTKVHRHRR) constitute a propeptide that is removed on maturation. N-linked (GlcNAc...) asparagine glycosylation is present at Asn-24. The Peptidase M12A domain maps to 62-264 (EVIAGQIYDW…AKVINDIYCP (203 aa)). 6 disulfides stabilise this stretch: Cys-103–Cys-263, Cys-126–Cys-146, Cys-267–Cys-286, Cys-289–Cys-300, Cys-308–Cys-331, and Cys-358–Cys-378. His-154 serves as a coordination point for Zn(2+). Glu-155 is a catalytic residue. Zn(2+) contacts are provided by His-158 and His-164. Residues 251-307 (AFLDAKVINDIYCPNACQGRNHLNCLAGGYPDPNNCNVCRCPEGLGGPDCGRLQPSP) form the EGF-like domain. In terms of domain architecture, CUB spans 308–414 (CGGEIHASDQ…RFSLRFRRQA (107 aa)).

Zn(2+) serves as cofactor.

Its subcellular location is the secreted. Its function is as follows. Metalloprotease. This chain is Zinc metalloproteinase nas-26 (toh-1), found in Caenorhabditis elegans.